The following is a 674-amino-acid chain: Membrane-anchored lipid-binding protein LAM5 (674 aa).

Disordered regions lie at residues 1-52 and 65-151; these read MSDV…LNTE and NQSA…GSPL. Residues 1–633 are Cytoplasmic-facing; that stretch reads MSDVDNWEPV…AEQQGLKVTM (633 aa). Positions 69–81 are enriched in basic and acidic residues; that stretch reads ADEHPTEIKHDQS. Low complexity predominate over residues 82 to 119; it reads RTSSTSSFFSGMISSFKSNVPSPVSRSTTPTSPVSQPS. Residue threonine 110 is modified to Phosphothreonine. A phosphoserine mark is found at serine 113 and serine 140. Residue threonine 143 is modified to Phosphothreonine. Serine 149 is subject to Phosphoserine. Residues 198–264 enclose the GRAM domain; that stretch reads KDFHETFKSV…FEDVTFMEKT (67 aa). Residues 336–357 show a composition bias toward acidic residues; it reads IDEENNDKDANDNDTNENDDEN. Residues 336–380 are disordered; sequence IDEENNDKDANDNDTNENDDENISTNETTPNSTSSSPDKEKEKAY. Residues 358 to 371 show a composition bias toward low complexity; the sequence is ISTNETTPNSTSSS. The 174-residue stretch at 409–582 folds into the VASt domain; sequence NEFVLKELPF…ILSKFIKNNV (174 aa). A helical membrane pass occupies residues 634–654; the sequence is ETWLFLYLIVVVLLLFNLFYI. Topologically, residues 655-674 are lumenal; the sequence is RSIAVSLHQLVKLQLVELKL.

The protein belongs to the YSP2 family.

The protein resides in the endoplasmic reticulum membrane. In terms of biological role, may be involved in sterol transfer between intracellular membranes. The sequence is that of Membrane-anchored lipid-binding protein LAM5 from Saccharomyces cerevisiae (strain ATCC 204508 / S288c) (Baker's yeast).